The sequence spans 424 residues: MSDHADVSLPPQDRVRILSQLGSAVELNEDIPPRRYFRSGVEIIRMASIYSEEGNIEHAFILYNKYITLFIEKLPKHRDYKSAIIPEKKDAVKKLKNVAFPKAEELKTELLKRYTKEYEQYKERKKKEEEELARNIAIQQELEKEKQRVAQQKQKQLEQEQFHAFEKMIQKQELEKERLKIVQEFGKVDPGPCGPLLPDLEKPCVDVAPSSPFSPTQTSDCNTTLRPAKPPVVDRSLKPGALSVIENVPTIEGLRHIVVPRNLCSEFLQLASANTAKGIETCGVLCGKLMRNEFTITHVLIPRQNGGPDYCHTENEEEIFFMQDDLGLLTLGWIHTHPTQTAFLSSVDLHTHCSYQMMLPESIAIVCSPKFQETGFFKLTDYGLQEISTCRQKGFHPHGRDPPLFCDCSHVTVKDRIVTITDLR.

The segment at 1–127 (MSDHADVSLP…YEQYKERKKK (127 aa)) is interaction with CHMP3. Residues serine 2 and serine 48 each carry the phosphoserine modification. Residues 227-231 (PAKPP) form an interaction with STAM region. Serine 243 bears the Phosphoserine mark. The 132-residue stretch at 257 to 388 (IVVPRNLCSE…LTDYGLQEIS (132 aa)) folds into the MPN domain. Residues histidine 335, histidine 337, aspartate 348, histidine 350, cysteine 390, histidine 396, and histidine 398 each contribute to the Zn(2+) site. The short motif at 335-348 (HTHPTQTAFLSSVD) is the JAMM motif element.

This sequence belongs to the peptidase M67C family. In terms of assembly, interacts with STAM. Interacts with SMAD6 and SMAD7. Interacts with CHMP3; the interaction appears to relieve the autoinhibition of CHMP3. Interacts with SMURF2 and RNF11; this interaction promotes ubiquitination. The cofactor is Zn(2+). In terms of processing, phosphorylated after BMP type I receptor activation. Ubiquitinated by SMURF2 in the presence of RNF11.

It localises to the nucleus. The protein localises to the membrane. It is found in the cytoplasm. The protein resides in the early endosome. Inhibited by N-ethylmaleimide. Functionally, zinc metalloprotease that specifically cleaves 'Lys-63'-linked polyubiquitin chains. Does not cleave 'Lys-48'-linked polyubiquitin chains. Plays a role in signal transduction for cell growth and MYC induction mediated by IL-2 and GM-CSF. Potentiates BMP (bone morphogenetic protein) signaling by antagonizing the inhibitory action of SMAD6 and SMAD7. Has a key role in regulation of cell surface receptor-mediated endocytosis and ubiquitin-dependent sorting of receptors to lysosomes. Endosomal localization of STAMBP is required for efficient EGFR degradation but not for its internalization. Involved in the negative regulation of PI3K-AKT-mTOR and RAS-MAP signaling pathways. This chain is STAM-binding protein (Stambp), found in Rattus norvegicus (Rat).